The following is a 194-amino-acid chain: AP-3 complex subunit sigma (194 aa).

It belongs to the adaptor complexes small subunit family. In terms of assembly, adaptor protein complex 3 (AP-3) is a heterotetramer composed of 2 large adaptins (APL5 and APL6), a medium adaptin (APM3) and a small adaptin (APS3).

The protein resides in the golgi apparatus. The protein localises to the cytoplasmic vesicle membrane. Its function is as follows. Part of the AP-3 complex, an adaptor-related complex which is not clathrin-associated. The complex is associated with the Golgi region as well as more peripheral structures. It facilitates the budding of vesicles from the Golgi membrane and may be directly involved in trafficking to the vacuole. Required for the transport via the ALP pathway, which directs the transport of the cargo proteins PHO8 and VAM3 to the vacuole. The sequence is that of AP-3 complex subunit sigma (APS3) from Saccharomyces cerevisiae (strain ATCC 204508 / S288c) (Baker's yeast).